The following is a 349-amino-acid chain: C-X-C chemokine receptor type 4 (349 aa).

The tract at residues 1–18 is important for chemokine binding and signaling; the sequence is MEIYTSDNYSEEVGSGDY. Positions 1-23 are disordered; the sequence is MEIYTSDNYSEEVGSGDYDSNKE. The Extracellular portion of the chain corresponds to 1–35; it reads MEIYTSDNYSEEVGSGDYDSNKEPCFRDENENFNR. Residue asparagine 8 is glycosylated (N-linked (GlcNAc...) asparagine). Tyrosine 9 bears the Sulfotyrosine mark. Residue serine 15 is glycosylated (O-linked (Xyl...) (chondroitin sulfate) serine). At tyrosine 18 the chain carries Sulfotyrosine. 2 disulfides stabilise this stretch: cysteine 25–cysteine 271 and cysteine 106–cysteine 183. Residues 36–60 traverse the membrane as a helical segment; the sequence is IFLPTIYFIIFLTGIVGNGLVILVM. Residues 61 to 74 lie on the Cytoplasmic side of the membrane; the sequence is GYQKKLRSMTDKYR. Residues 75-96 form a helical membrane-spanning segment; the sequence is LHLSVADLLFVITLPFWAVDAM. The tract at residues 91 to 94 is chemokine binding; it reads WAVD. Topologically, residues 97 to 107 are extracellular; sequence ADWYFGKFLCK. Residues 108 to 127 traverse the membrane as a helical segment; it reads AVHIIYTVNLYSSVLILAFI. Positions 110–114 are chemokine binding; sequence HIIYT. The Cytoplasmic portion of the chain corresponds to 128–151; that stretch reads SLDRYLAIVHATNSQRPRKLLAEK. The Important for signaling motif lies at 130 to 132; that stretch reads DRY. The involved in dimerization; when bound to chemokine stretch occupies residues 132–144; sequence YLAIVHATNSQRP. The chain crosses the membrane as a helical span at residues 152 to 171; that stretch reads AVYVGVWIPALLLTIPDIIF. At 172–192 the chain is on the extracellular side; sequence ADVSQGDGRYICDRLYPDSLW. Positions 183 to 187 are chemokine binding, important for signaling; sequence CDRLY. An involved in dimerization region spans residues 188–207; sequence PDSLWMVVFQFQHIMVGLIL. A helical transmembrane segment spans residues 193 to 213; sequence MVVFQFQHIMVGLILPGIVIL. The Cytoplasmic segment spans residues 214–238; that stretch reads SCYCIIISKLSHSKGHQKRKALKTT. A helical transmembrane segment spans residues 239-258; sequence VILILAFFACWLPYYVGISI. Over 259–279 the chain is Extracellular; it reads DSFILLEVIKQGCEFESVVHK. The tract at residues 263–265 is involved in dimerization; sequence LLE. A helical transmembrane segment spans residues 280 to 299; sequence WISITEALAFFHCCLNPILY. The Cytoplasmic segment spans residues 300-349; it reads AFLGAKFKSSAQHALNSMSRGSSLKILSKGKRGGHSSVSTESESSSFHSS. A phosphoserine mark is found at serine 316 and serine 318. Phosphoserine; by PKC and GRK6 is present on residues serine 321 and serine 322. The tract at residues 325–349 is disordered; that stretch reads ILSKGKRGGHSSVSTESESSSFHSS. Serine 327 bears the Phosphoserine; by GRK6 mark. Residue lysine 328 forms a Glycyl lysine isopeptide (Lys-Gly) (interchain with G-Cter in ubiquitin) linkage. The span at 334–349 shows a compositional bias: low complexity; it reads HSSVSTESESSSFHSS. Serine 336 carries the phosphoserine; by GRK6 modification. A phosphoserine mark is found at serine 345 and serine 348.

The protein belongs to the G-protein coupled receptor 1 family. Monomer. Can form homodimers. Interacts with CD164. Interacts with ARRB2; the interaction is dependent on the C-terminal phosphorylation of CXCR4 and allows activation of MAPK1 and MAPK3. Interacts with ARR3; the interaction is dependent on the C-terminal phosphorylation of CXCR4 and modulates calcium mobilization. Interacts with RNF113A; the interaction, enhanced by CXCL12, promotes CXCR4 ubiquitination and subsequent degradation. Interacts (via the cytoplasmic C-terminal) with ITCH (via the WW domains I and II); the interaction, enhanced by CXCL12, promotes CXCR4 ubiquitination and leads to its degradation. Interacts with extracellular ubiquitin. Interacts with DBN1; this interaction is enhanced by antigenic stimulation. Following LPS binding, may form a complex with GDF5, HSP90AA1 and HSPA8. In terms of processing, phosphorylated on agonist stimulation. Rapidly phosphorylated on serine and threonine residues in the C-terminal. Phosphorylation at Ser-321 and Ser-322 leads to recruitment of ITCH, ubiquitination and protein degradation. Ubiquitinated after ligand binding, leading to its degradation. Ubiquitinated by ITCH at the cell membrane on agonist stimulation. The ubiquitin-dependent mechanism, endosomal sorting complex required for transport (ESCRT), then targets CXCR4 for lysosomal degradation. This process is dependent also on prior Ser-/Thr-phosphorylation in the C-terminal of CXCR4. Also binding of ARRB1 to STAM negatively regulates CXCR4 sorting to lysosomes though modulating ubiquitination of SFR5S. Post-translationally, sulfation is required for efficient binding of CXCL12/SDF-1alpha and promotes its dimerization. In terms of processing, O- and N-glycosylated. N-glycosylation can mask coreceptor function. The O-glycosylation chondroitin sulfate attachment does not affect interaction with CXCL12/SDF-1alpha nor its coreceptor activity.

Its subcellular location is the cell membrane. The protein resides in the cell junction. The protein localises to the early endosome. It localises to the late endosome. It is found in the lysosome. Functionally, receptor for the C-X-C chemokine CXCL12/SDF-1 that transduces a signal by increasing intracellular calcium ion levels and enhancing MAPK1/MAPK3 activation. Involved in the AKT signaling cascade. Plays a role in regulation of cell migration, e.g. during wound healing. Acts as a receptor for extracellular ubiquitin; leading to enhanced intracellular calcium ions and reduced cellular cAMP levels. Binds bacterial lipopolysaccharide (LPS) et mediates LPS-induced inflammatory response, including TNF secretion by monocytes. Involved in hematopoiesis and in cardiac ventricular septum formation. Also plays an essential role in vascularization of the gastrointestinal tract, probably by regulating vascular branching and/or remodeling processes in endothelial cells. Involved in cerebellar development. In the CNS, could mediate hippocampal-neuron survival. The polypeptide is C-X-C chemokine receptor type 4 (Cxcr4) (Rattus norvegicus (Rat)).